The sequence spans 557 residues: Phosphoribosylaminoimidazole carboxylase, chloroplastic (557 aa).

One can recognise an ATP-grasp domain in the interval 108-293 (KVALLPAWIP…QFEQHLPAVV (186 aa)). 132–189 (WDSLDIHFMIKSRRLAYDGRGNFVAKSEEELSSAVDALGGFDRGLYAEKWAPFVKELA) is a binding site for ATP. The interval 387–557 (CSTLLGFIMG…HGWESYLKNS (171 aa)) is AIR carboxylase catalytic subunit.

The protein in the C-terminal section; belongs to the AIR carboxylase family. Class I subfamily.

The protein localises to the plastid. It localises to the chloroplast. It catalyses the reaction 5-amino-1-(5-phospho-D-ribosyl)imidazole-4-carboxylate + H(+) = 5-amino-1-(5-phospho-beta-D-ribosyl)imidazole + CO2. It participates in purine metabolism; IMP biosynthesis via de novo pathway; 5-amino-1-(5-phospho-D-ribosyl)imidazole-4-carboxylate from 5-amino-1-(5-phospho-D-ribosyl)imidazole (carboxylase route): step 1/1. The polypeptide is Phosphoribosylaminoimidazole carboxylase, chloroplastic (PURKE) (Vigna aconitifolia (Moth bean)).